The sequence spans 37 residues: Large ribosomal subunit protein bL36c (37 aa).

This sequence belongs to the bacterial ribosomal protein bL36 family.

It is found in the plastid. It localises to the cyanelle. The polypeptide is Large ribosomal subunit protein bL36c (rpl36) (Cyanophora paradoxa).